A 369-amino-acid polypeptide reads, in one-letter code: Aspartate-semialdehyde dehydrogenase (369 aa).

Residues 11 to 14 (RGMV), 38 to 39 (TS), and Gln-75 each bind NADP(+). Arg-104 contributes to the phosphate binding site. Catalysis depends on Cys-137, which acts as the Acyl-thioester intermediate. Gln-164 contributes to the substrate binding site. NADP(+) contacts are provided by residues 167–168 (SG) and Pro-195. A substrate-binding site is contributed by Glu-243. A phosphate-binding site is contributed by Lys-246. Arg-269 lines the substrate pocket. His-276 acts as the Proton acceptor in catalysis. Gln-352 contributes to the NADP(+) binding site.

It belongs to the aspartate-semialdehyde dehydrogenase family. As to quaternary structure, homodimer.

The catalysed reaction is L-aspartate 4-semialdehyde + phosphate + NADP(+) = 4-phospho-L-aspartate + NADPH + H(+). The protein operates within amino-acid biosynthesis; L-lysine biosynthesis via DAP pathway; (S)-tetrahydrodipicolinate from L-aspartate: step 2/4. Its pathway is amino-acid biosynthesis; L-methionine biosynthesis via de novo pathway; L-homoserine from L-aspartate: step 2/3. It participates in amino-acid biosynthesis; L-threonine biosynthesis; L-threonine from L-aspartate: step 2/5. In terms of biological role, catalyzes the NADPH-dependent formation of L-aspartate-semialdehyde (L-ASA) by the reductive dephosphorylation of L-aspartyl-4-phosphate. This is Aspartate-semialdehyde dehydrogenase from Buchnera aphidicola subsp. Baizongia pistaciae (strain Bp).